The primary structure comprises 283 residues: Pantothenate synthetase (283 aa).

Residue 31–38 (MGALHDGH) coordinates ATP. The active-site Proton donor is His38. Position 62 (Gln62) interacts with (R)-pantoate. Gln62 contacts beta-alanine. 148–151 (GKKD) provides a ligand contact to ATP. Gln154 contacts (R)-pantoate. ATP is bound by residues Val177 and 185–188 (KSSR).

It belongs to the pantothenate synthetase family. As to quaternary structure, homodimer.

It is found in the cytoplasm. It catalyses the reaction (R)-pantoate + beta-alanine + ATP = (R)-pantothenate + AMP + diphosphate + H(+). Its pathway is cofactor biosynthesis; (R)-pantothenate biosynthesis; (R)-pantothenate from (R)-pantoate and beta-alanine: step 1/1. Its function is as follows. Catalyzes the condensation of pantoate with beta-alanine in an ATP-dependent reaction via a pantoyl-adenylate intermediate. This is Pantothenate synthetase from Staphylococcus aureus (strain MSSA476).